The primary structure comprises 597 residues: Elongation factor 4 (597 aa).

In terms of domain architecture, tr-type G spans 2 to 184; it reads KHIRNFSIIA…KIVSAIPAPE (183 aa). GTP contacts are provided by residues 14–19 and 131–134; these read DHGKST and NKID.

The protein belongs to the TRAFAC class translation factor GTPase superfamily. Classic translation factor GTPase family. LepA subfamily.

Its subcellular location is the cell inner membrane. The enzyme catalyses GTP + H2O = GDP + phosphate + H(+). In terms of biological role, required for accurate and efficient protein synthesis under certain stress conditions. May act as a fidelity factor of the translation reaction, by catalyzing a one-codon backward translocation of tRNAs on improperly translocated ribosomes. Back-translocation proceeds from a post-translocation (POST) complex to a pre-translocation (PRE) complex, thus giving elongation factor G a second chance to translocate the tRNAs correctly. Binds to ribosomes in a GTP-dependent manner. The chain is Elongation factor 4 from Vibrio vulnificus (strain CMCP6).